The chain runs to 199 residues: Single-stranded DNA cytosine deaminase (199 aa).

A Bipartite nuclear localization signal motif is present at residues 1 to 30; the sequence is MDSLLKKQRQFLYQFKNVRWAKGRHETYLC. The tract at residues 2 to 26 is interaction with SUPT6H; sequence DSLLKKQRQFLYQFKNVRWAKGRHE. Residues 23–130 enclose the CMP/dCMP-type deaminase domain; sequence GRHETYLCYV…KAEPEGLRRL (108 aa). Position 27 is a phosphothreonine; by PKA (Thr27). Ser38 carries the post-translational modification Phosphoserine; by PKA. The tract at residues 39-42 is important for interaction with CTNNBL1; it reads PTSF. His56 lines the Zn(2+) pocket. The active-site Proton donor is the Glu58. Cys87 and Cys90 together coordinate Zn(2+). Positions 88–116 are required for interaction with RNF126; the sequence is YDCARHVADFLRGYPNLSLRIFTARLYFC. Positions 184–199 match the Nuclear export signal motif; that stretch reads LYEVDDLRDAFRTLGL.

Belongs to the cytidine and deoxycytidylate deaminase family. In terms of assembly, interacts with CTNNBL1; the interaction is important for the immunoglobulin switch activity of AICDA. Interacts (via its NLS) with KPNA1. Interacts with PKA/PRKACA and PRKAR1A/PKR1. Interacts with SUPT6H, TRIM28 and NCL. Directly interacts with MCM3AP; this interaction may favor AICDA recruitment to immunoglobulin variable region genes, hence promoting somatic hypermutations. Requires Zn(2+) as cofactor. In terms of processing, ser-38 is the major site whereas Thr-27 is the minor site of phosphorylation. Phosphorylation regulates its class-switch recombination activity. Post-translationally, probably monoubiquitinated on several residues by RNF126. As to expression, expressed in lymph nodes, spleen and thymus.

The protein resides in the nucleus. It localises to the cytoplasm. The enzyme catalyses a 2'-deoxycytidine in single-stranded DNA + H2O + H(+) = a 2'-deoxyuridine in single-stranded DNA + NH4(+). Single-stranded DNA-specific cytidine deaminase. Involved in somatic hypermutation (SHM), gene conversion, and class-switch recombination (CSR) in B-lymphocytes by deaminating C to U during transcription of Ig-variable (V) and Ig-switch (S) region DNA. Required for several crucial steps of B-cell terminal differentiation necessary for efficient antibody responses. May also play a role in the epigenetic regulation of gene expression by participating in DNA demethylation. The chain is Single-stranded DNA cytosine deaminase (AICDA) from Bos taurus (Bovine).